Reading from the N-terminus, the 216-residue chain is Octanoyltransferase (216 aa).

In terms of domain architecture, BPL/LPL catalytic spans 33 to 212 (AHTPDELWLV…ILSNILGLTA (180 aa)). Substrate is bound by residues 72 to 79 (RGGQVTYH), 139 to 141 (SLG), and 152 to 154 (GVA). Cysteine 170 acts as the Acyl-thioester intermediate in catalysis.

The protein belongs to the LipB family.

The protein localises to the cytoplasm. The enzyme catalyses octanoyl-[ACP] + L-lysyl-[protein] = N(6)-octanoyl-L-lysyl-[protein] + holo-[ACP] + H(+). Its pathway is protein modification; protein lipoylation via endogenous pathway; protein N(6)-(lipoyl)lysine from octanoyl-[acyl-carrier-protein]: step 1/2. In terms of biological role, catalyzes the transfer of endogenously produced octanoic acid from octanoyl-acyl-carrier-protein onto the lipoyl domains of lipoate-dependent enzymes. Lipoyl-ACP can also act as a substrate although octanoyl-ACP is likely to be the physiological substrate. This Saccharophagus degradans (strain 2-40 / ATCC 43961 / DSM 17024) protein is Octanoyltransferase.